A 331-amino-acid chain; its full sequence is Inositol 2-dehydrogenase (331 aa).

Belongs to the Gfo/Idh/MocA family. As to quaternary structure, homotetramer.

The enzyme catalyses myo-inositol + NAD(+) = scyllo-inosose + NADH + H(+). In terms of biological role, involved in the oxidation of myo-inositol (MI) to 2-keto-myo-inositol (2KMI or 2-inosose). This chain is Inositol 2-dehydrogenase, found in Renibacterium salmoninarum (strain ATCC 33209 / DSM 20767 / JCM 11484 / NBRC 15589 / NCIMB 2235).